We begin with the raw amino-acid sequence, 428 residues long: 3-phosphoshikimate 1-carboxyvinyltransferase (428 aa).

The 3-phosphoshikimate site is built by lysine 23, serine 24, and arginine 28. Phosphoenolpyruvate is bound at residue lysine 23. Residues glycine 97 and arginine 125 each coordinate phosphoenolpyruvate. 3-phosphoshikimate contacts are provided by serine 170, serine 171, glutamine 172, serine 198, aspartate 314, asparagine 337, and lysine 341. Glutamine 172 contributes to the phosphoenolpyruvate binding site. The active-site Proton acceptor is the aspartate 314. Phosphoenolpyruvate contacts are provided by arginine 345, arginine 387, and lysine 412.

It belongs to the EPSP synthase family. Monomer.

It localises to the cytoplasm. It catalyses the reaction 3-phosphoshikimate + phosphoenolpyruvate = 5-O-(1-carboxyvinyl)-3-phosphoshikimate + phosphate. It functions in the pathway metabolic intermediate biosynthesis; chorismate biosynthesis; chorismate from D-erythrose 4-phosphate and phosphoenolpyruvate: step 6/7. Its function is as follows. Catalyzes the transfer of the enolpyruvyl moiety of phosphoenolpyruvate (PEP) to the 5-hydroxyl of shikimate-3-phosphate (S3P) to produce enolpyruvyl shikimate-3-phosphate and inorganic phosphate. This is 3-phosphoshikimate 1-carboxyvinyltransferase from Buchnera aphidicola subsp. Schizaphis graminum (strain Sg).